The chain runs to 198 residues: Probable molybdenum cofactor guanylyltransferase (198 aa).

GTP contacts are provided by residues L9–G11, K22, D66, and D95. D95 contacts Mg(2+).

Belongs to the MobA family. Mg(2+) is required as a cofactor.

It localises to the cytoplasm. The enzyme catalyses Mo-molybdopterin + GTP + H(+) = Mo-molybdopterin guanine dinucleotide + diphosphate. Transfers a GMP moiety from GTP to Mo-molybdopterin (Mo-MPT) cofactor (Moco or molybdenum cofactor) to form Mo-molybdopterin guanine dinucleotide (Mo-MGD) cofactor. This is Probable molybdenum cofactor guanylyltransferase from Clostridium perfringens (strain ATCC 13124 / DSM 756 / JCM 1290 / NCIMB 6125 / NCTC 8237 / Type A).